The following is a 102-amino-acid chain: uncharacterized protein (102 aa).

The next 3 helical transmembrane spans lie at Met-1 to Val-21, Ser-42 to Val-62, and Ser-68 to Val-88.

The protein localises to the membrane. This is an uncharacterized protein from Saccharomyces cerevisiae (strain ATCC 204508 / S288c) (Baker's yeast).